The sequence spans 626 residues: Ankyrin repeat domain-containing protein 13B (626 aa).

Methionine 1 carries the post-translational modification N-acetylmethionine. 2 ANK repeats span residues 47–76 (RGRT…DVGR) and 80–109 (SGWT…YQRV). A disordered region spans residues 442 to 474 (PVPSVRGSPSSETPSPGSDSSSVSSSSSTTSCR). Low complexity predominate over residues 449–472 (SPSSETPSPGSDSSSVSSSSSTTS). The UIM 1 domain maps to 503 to 522 (DDDDLLQFAIQQSLLEAGSE). 2 disordered regions span residues 534–590 (NSKP…DEQL) and 595–614 (ELSA…EEEE). A compositionally biased stretch (pro residues) spans 554–573 (PPTPQRQPAPPASVPSPRPS). UIM domains follow at residues 585 to 604 (SYDE…QEER) and 610 to 626 (QEEE…LTEQ).

In terms of assembly, interacts with EGFR (ubiquitinated); the interaction is direct and may regulate EGFR internalization.

It is found in the cell membrane. Its subcellular location is the late endosome. It localises to the early endosome. Ubiquitin-binding protein that specifically recognizes and binds 'Lys-63'-linked ubiquitin. Does not bind 'Lys-48'-linked ubiquitin. Positively regulates the internalization of ligand-activated EGFR by binding to the Ub moiety of ubiquitinated EGFR at the cell membrane. In Homo sapiens (Human), this protein is Ankyrin repeat domain-containing protein 13B (ANKRD13B).